A 632-amino-acid polypeptide reads, in one-letter code: Sodium- and chloride-dependent GABA transporter 3 (632 aa).

Positions 1-41 are disordered; sequence MTAEKALPLGNGKAAEEARESEAPGGGCSSGGAAPARHPRV. Residues 1–58 lie on the Cytoplasmic side of the membrane; it reads MTAEKALPLGNGKAAEEARESEAPGGGCSSGGAAPARHPRVKRDKAVHERGHWNNKVE. A Phosphoserine modification is found at S21. 3 helical membrane passes run 59 to 79, 87 to 106, and 131 to 151; these read FVLSVAGEIIGLGNVWRFPYL, AFLIPYVVFFICCGIPVFFL, and GIGYATQVIEAHLNVYYIIIL. Residues 152 to 225 lie on the Extracellular side of the membrane; the sequence is AWAIFYLSNC…DGIEHIGNLR (74 aa). Residues N187, N190, and N198 are each glycosylated (N-linked (GlcNAc...) asparagine). 9 helical membrane-spanning segments follow: residues 226–244, 253–270, 306–323, 335–356, 389–408, 438–456, 473–493, 514–533, and 553–571; these read WELALCLLAAWTICYFCIW, VVYVTATFPYIMLLILLI, IFFSYAICLGCLTALGSY, IMLCCLNSGTSFVAGFAIFSVL, MPLSPLWATLFFMMLIFLGL, LLILALSVISYFLGLVMLT, GMCLLFVAIFECICIGWVYGS, WCWMIMTPGICAGIFIFFLI, and IGWLMALSSMLCIPLWICI. At 572–632 the chain is on the cytoplasmic side; sequence TVWKTEGTLP…AAITEKETHF (61 aa).

This sequence belongs to the sodium:neurotransmitter symporter (SNF) (TC 2.A.22) family. SLC6A11 subfamily. In terms of tissue distribution, widespread distribution in the brain.

It localises to the cell membrane. It carries out the reaction 4-aminobutanoate(out) + chloride(out) + 2 Na(+)(out) = 4-aminobutanoate(in) + chloride(in) + 2 Na(+)(in). The enzyme catalyses taurine(out) + chloride(out) + 2 Na(+)(out) = taurine(in) + chloride(in) + 2 Na(+)(in). The catalysed reaction is beta-alanine(out) + chloride(out) + 2 Na(+)(out) = beta-alanine(in) + chloride(in) + 2 Na(+)(in). It catalyses the reaction hypotaurine(out) + chloride(out) + 2 Na(+)(out) = hypotaurine(in) + chloride(in) + 2 Na(+)(in). Its activity is regulated as follows. GABA transport is inhibited by SNAP-5114. Mediates sodium- and chloride-dependent transport of gamma-aminobutyric acid (GABA). Can also mediate transport of beta-alanine and to a lower extent that of taurine and hypotaurine. The polypeptide is Sodium- and chloride-dependent GABA transporter 3 (SLC6A11) (Homo sapiens (Human)).